Consider the following 419-residue polypeptide: L-rhamnose isomerase (419 aa).

Positions 262, 294, and 296 each coordinate Mn(2+).

Belongs to the rhamnose isomerase family. Homotetramer. Mn(2+) serves as cofactor.

The protein localises to the cytoplasm. It catalyses the reaction L-rhamnopyranose = L-rhamnulose. It participates in carbohydrate degradation; L-rhamnose degradation; glycerone phosphate from L-rhamnose: step 1/3. In terms of biological role, catalyzes the interconversion of L-rhamnose and L-rhamnulose. The chain is L-rhamnose isomerase from Citrobacter koseri (strain ATCC BAA-895 / CDC 4225-83 / SGSC4696).